Here is a 388-residue protein sequence, read N- to C-terminus: Phosphopentomutase (388 aa).

Residues Asp10, Asp282, His287, Asp323, His324, and His335 each coordinate Mn(2+).

Belongs to the phosphopentomutase family. Mn(2+) is required as a cofactor.

It is found in the cytoplasm. The catalysed reaction is 2-deoxy-alpha-D-ribose 1-phosphate = 2-deoxy-D-ribose 5-phosphate. It carries out the reaction alpha-D-ribose 1-phosphate = D-ribose 5-phosphate. Its pathway is carbohydrate degradation; 2-deoxy-D-ribose 1-phosphate degradation; D-glyceraldehyde 3-phosphate and acetaldehyde from 2-deoxy-alpha-D-ribose 1-phosphate: step 1/2. Functionally, isomerase that catalyzes the conversion of deoxy-ribose 1-phosphate (dRib-1-P) and ribose 1-phosphate (Rib-1-P) to deoxy-ribose 5-phosphate (dRib-5-P) and ribose 5-phosphate (Rib-5-P), respectively. The polypeptide is Phosphopentomutase (Desulfitobacterium hafniense (strain DSM 10664 / DCB-2)).